The sequence spans 461 residues: Secreted 45 kDa protein (461 aa).

A signal peptide spans M1–A27. Positions S264–G329 are enriched in low complexity. The segment at S264–S343 is disordered. Residues N330–G340 show a composition bias toward gly residues. Residues N330 to M459 enclose the Peptidase C51 domain.

The chain is Secreted 45 kDa protein (usp45) from Lactococcus lactis subsp. cremoris (strain MG1363).